A 427-amino-acid chain; its full sequence is G2/mitotic-specific cyclin-B1 (427 aa).

The segment at A33–T126 is disordered. K73 bears the N6-acetyllysine mark. A compositionally biased stretch (basic and acidic residues) spans E100 to S110. Position 120 is a phosphoserine; by CDK1 (S120). At S122 the chain carries Phosphoserine. Phosphoserine; by PLK1 is present on S127. S141 bears the Phosphoserine mark. Interaction with CDK2 regions lie at residues E163–Y171 and Y252–M255. The residue at position 315 (T315) is a Phosphothreonine.

It belongs to the cyclin family. Cyclin AB subfamily. As to quaternary structure, interacts with the CDC2 protein kinase to form a serine/threonine kinase holoenzyme complex also known as maturation promoting factor (MPF). The cyclin subunit imparts substrate specificity to the complex. Binds HEI10. Interacts with catalytically active RALBP1 and CDC2 during mitosis to form an endocytotic complex during interphase. Interacts with CCNF; interaction is required for nuclear localization. Interacts with CDK5RAP3. Interacts with RFPL4A and UBE2A. Interacts with INCA1. Post-translationally, ubiquitinated by the SCF(NIPA) complex during interphase, leading to its destruction. Deubiquitinated by USP22 during G2/M phase. Phosphorylated by PLK1 at Ser-127 on centrosomes during prophase: phosphorylation by PLK1 does not cause nuclear import. Phosphorylation at Ser-141 was also reported to be mediated by PLK1 but Ser-127 seems to be the primary phosphorylation site.

It localises to the cytoplasm. It is found in the nucleus. The protein resides in the cytoskeleton. Its subcellular location is the microtubule organizing center. The protein localises to the centrosome. Its function is as follows. Essential for the control of the cell cycle at the G2/M (mitosis) transition. This is G2/mitotic-specific cyclin-B1 (CCNB1) from Bos taurus (Bovine).